A 384-amino-acid chain; its full sequence is Probable zinc-binding alcohol dehydrogenase Rv1895 (384 aa).

The Zn(2+) site is built by cysteine 38, histidine 59, cysteine 89, cysteine 92, cysteine 95, and cysteine 103.

Belongs to the zinc-containing alcohol dehydrogenase family. It depends on Zn(2+) as a cofactor.

It carries out the reaction a primary alcohol + NAD(+) = an aldehyde + NADH + H(+). The catalysed reaction is a secondary alcohol + NAD(+) = a ketone + NADH + H(+). This chain is Probable zinc-binding alcohol dehydrogenase Rv1895, found in Mycobacterium tuberculosis (strain ATCC 25618 / H37Rv).